A 425-amino-acid polypeptide reads, in one-letter code: Formyl-CoA:oxalate CoA-transferase (425 aa).

CoA-binding positions include 17–18 (QS), Arg-38, 72–75 (LDTK), 96–98 (NFG), Arg-104, and 136–139 (KVYE). Residue Asp-168 is the Nucleophile of the active site. 247–249 (GGQ) serves as a coordination point for substrate.

Belongs to the CoA-transferase III family. Frc subfamily. Homodimer.

The catalysed reaction is formyl-CoA + oxalate = oxalyl-CoA + formate. Its pathway is metabolic intermediate degradation; oxalate degradation; CO(2) and formate from oxalate: step 1/2. Functionally, involved in the catabolism of oxalate and in the adapatation to low pH via the induction of the oxalate-dependent acid tolerance response (ATR). Catalyzes the transfer of the CoA moiety from formyl-CoA to oxalate. In Rhodopseudomonas palustris (strain HaA2), this protein is Formyl-CoA:oxalate CoA-transferase.